Here is a 282-residue protein sequence, read N- to C-terminus: Putative SWIB domain-containing protein 070L (282 aa).

Residues 1 to 16 show a composition bias toward low complexity; it reads MFQTTPKQVKPTTVPK. The interval 1–21 is disordered; sequence MFQTTPKQVKPTTVPKTGRKN. The SWIB/MDM2 domain occupies 97 to 181; that stretch reads GLEKPRMISE…QKYLKHCFDE (85 aa). A disordered region spans residues 199 to 282; sequence TDDQTTAEEA…KVKKEHKIKK (84 aa). Over residues 262-275 the composition is skewed to basic and acidic residues; the sequence is GKKDKENIPLEKVK.

The protein belongs to the IIV-6 306R family.

This Invertebrate iridescent virus 3 (IIV-3) protein is Putative SWIB domain-containing protein 070L.